Here is a 107-residue protein sequence, read N- to C-terminus: uncharacterized protein (107 aa).

Positions 1–14 are enriched in polar residues; it reads MTERNASGRMNTKG. Positions 1 to 20 are disordered; the sequence is MTERNASGRMNTKGRSIKET.

The protein localises to the mitochondrion. This is an uncharacterized protein from Arabidopsis thaliana (Mouse-ear cress).